Consider the following 396-residue polypeptide: Ribosomal RNA large subunit methyltransferase I (396 aa).

Residues 2–79 enclose the PUA domain; it reads SVRLVLAKGR…QAESIDIAFF (78 aa).

Belongs to the methyltransferase superfamily. RlmI family.

The protein resides in the cytoplasm. The enzyme catalyses cytidine(1962) in 23S rRNA + S-adenosyl-L-methionine = 5-methylcytidine(1962) in 23S rRNA + S-adenosyl-L-homocysteine + H(+). Its function is as follows. Specifically methylates the cytosine at position 1962 (m5C1962) of 23S rRNA. The chain is Ribosomal RNA large subunit methyltransferase I from Citrobacter koseri (strain ATCC BAA-895 / CDC 4225-83 / SGSC4696).